A 156-amino-acid chain; its full sequence is Snaclec A5 (156 aa).

Residues 1–23 (MGRSISVSFGLLVVFLSLSGTGA) form the signal peptide. 3 disulfides stabilise this stretch: C27/C38, C55/C154, and C129/C146. The C-type lectin domain occupies 34–155 (HEGHCYKVFN…CGKPYRFTCE (122 aa)).

Belongs to the snaclec family. Heterodimer; disulfide-linked. Expressed by the venom gland.

The protein resides in the secreted. Its function is as follows. Interferes with one step of hemostasis (modulation of platelet aggregation, or coagulation cascade, for example). This chain is Snaclec A5, found in Macrovipera lebetinus (Levantine viper).